The primary structure comprises 358 residues: Tetraacyldisaccharide 4'-kinase (358 aa).

71–78 (IAGGAGKT) serves as a coordination point for ATP.

The protein belongs to the LpxK family.

The catalysed reaction is a lipid A disaccharide + ATP = a lipid IVA + ADP + H(+). The protein operates within glycolipid biosynthesis; lipid IV(A) biosynthesis; lipid IV(A) from (3R)-3-hydroxytetradecanoyl-[acyl-carrier-protein] and UDP-N-acetyl-alpha-D-glucosamine: step 6/6. Functionally, transfers the gamma-phosphate of ATP to the 4'-position of a tetraacyldisaccharide 1-phosphate intermediate (termed DS-1-P) to form tetraacyldisaccharide 1,4'-bis-phosphate (lipid IVA). The polypeptide is Tetraacyldisaccharide 4'-kinase (Methylibium petroleiphilum (strain ATCC BAA-1232 / LMG 22953 / PM1)).